The sequence spans 553 residues: Hydroxylamine reductase (553 aa).

Cysteine 3, cysteine 6, cysteine 18, and cysteine 25 together coordinate [2Fe-2S] cluster. Residues histidine 252, glutamate 276, cysteine 320, cysteine 408, cysteine 436, cysteine 461, glutamate 495, and lysine 497 each contribute to the hybrid [4Fe-2O-2S] cluster site. Cysteine 408 bears the Cysteine persulfide mark.

Belongs to the HCP family. [2Fe-2S] cluster serves as cofactor. It depends on hybrid [4Fe-2O-2S] cluster as a cofactor.

It is found in the cytoplasm. The enzyme catalyses A + NH4(+) + H2O = hydroxylamine + AH2 + H(+). Catalyzes the reduction of hydroxylamine to form NH(3) and H(2)O. The chain is Hydroxylamine reductase from Vibrio vulnificus (strain YJ016).